A 134-amino-acid chain; its full sequence is MRSVLTISASLLFGLALSSVAHANDHKILGVIAMPRNETNDLTLKIPVCRIVKRIQLTADHGDIELSGASVYFKTARSASQSLNVPSSIKEGQTTGWININSDNDNKRCVSKITFSGHTVNSSDMARLKVIGDD.

The first 23 residues, 1–23 (MRSVLTISASLLFGLALSSVAHA), serve as a signal peptide directing secretion.

The protein belongs to the UPF0412 family.

This chain is UPF0412 protein YaaI, found in Salmonella choleraesuis (strain SC-B67).